The chain runs to 849 residues: Protein translocase subunit SecA (849 aa).

ATP is bound by residues Q85, 103–107 (GEGKT), and D493. Zn(2+)-binding residues include C832, C834, C843, and H844.

This sequence belongs to the SecA family. In terms of assembly, monomer and homodimer. Part of the essential Sec protein translocation apparatus which comprises SecA, SecYEG and auxiliary proteins SecDF. Other proteins may also be involved. Zn(2+) is required as a cofactor.

The protein localises to the cell membrane. Its subcellular location is the cytoplasm. The catalysed reaction is ATP + H2O + cellular proteinSide 1 = ADP + phosphate + cellular proteinSide 2.. In terms of biological role, part of the Sec protein translocase complex. Interacts with the SecYEG preprotein conducting channel. Has a central role in coupling the hydrolysis of ATP to the transfer of proteins into and across the cell membrane, serving as an ATP-driven molecular motor driving the stepwise translocation of polypeptide chains across the membrane. This is Protein translocase subunit SecA from Streptococcus thermophilus (strain ATCC BAA-250 / LMG 18311).